The sequence spans 380 residues: Cytochrome b (380 aa).

Transmembrane regions (helical) follow at residues 33–53, 77–98, 113–133, and 178–198; these read FGSLLGACLILQITTGLFLAM, WTIRYLHANGASMFFICLFLHI, WNIGIILLLTTMAAAFMGYVL, and FFTFHFILPFIITALTTLHLL. Residues His-83 and His-97 each coordinate heme b. Heme b contacts are provided by His-182 and His-196. His-201 serves as a coordination point for a ubiquinone. 4 helical membrane-spanning segments follow: residues 226-246, 288-308, 320-340, and 347-367; these read IKDILGLFLFLLTLMTLTLFS, LGGVLALLLSILILAMIPILH, LSQLLYWFLIADLFTLTWIGG, and FITIGQVASVLYFTTILFLMP.

It belongs to the cytochrome b family. In terms of assembly, the cytochrome bc1 complex contains 11 subunits: 3 respiratory subunits (MT-CYB, CYC1 and UQCRFS1), 2 core proteins (UQCRC1 and UQCRC2) and 6 low-molecular weight proteins (UQCRH/QCR6, UQCRB/QCR7, UQCRQ/QCR8, UQCR10/QCR9, UQCR11/QCR10 and a cleavage product of UQCRFS1). This cytochrome bc1 complex then forms a dimer. The cofactor is heme b.

It localises to the mitochondrion inner membrane. In terms of biological role, component of the ubiquinol-cytochrome c reductase complex (complex III or cytochrome b-c1 complex) that is part of the mitochondrial respiratory chain. The b-c1 complex mediates electron transfer from ubiquinol to cytochrome c. Contributes to the generation of a proton gradient across the mitochondrial membrane that is then used for ATP synthesis. This is Cytochrome b (MT-CYB) from Gorilla gorilla gorilla (Western lowland gorilla).